We begin with the raw amino-acid sequence, 310 residues long: Olfactory receptor 2A7 (310 aa).

Residues 1 to 24 (MGNNMTLITEFILLGFPLSPRMQM) lie on the Extracellular side of the membrane. N-linked (GlcNAc...) asparagine glycosylation is present at Asn4. A helical membrane pass occupies residues 25–45 (LLFALFSLFYAFTLLGNGTIV). The Cytoplasmic portion of the chain corresponds to 46–53 (GLICLDSR). Residues 54–74 (LHTPMYFFLSHLAIVDIAYAC) traverse the membrane as a helical segment. At 75-96 (NTVPQMLVNLLDPVKPISYAGC) the chain is on the extracellular side. Cys96 and Cys178 form a disulfide bridge. A helical transmembrane segment spans residues 97–117 (MTQTFLFLTFAITECLLLVVM). Residues 118–148 (SYDRYVAICHPLRYSAIMSWRVCSTMAVTSW) lie on the Cytoplasmic side of the membrane. The chain crosses the membrane as a helical span at residues 149–169 (IIGVLLSLIHLVLLLPLPFCV). Over 170-204 (SQKVNHFFCEITAILKLACADTHLNETMVLAGAVS) the chain is Extracellular. N-linked (GlcNAc...) asparagine glycosylation is present at Asn194. The helical transmembrane segment at 205–225 (VLVGPFSSIVVSYACILGAIL) threads the bilayer. Residues 226–239 (KIQSEEGQRKAFST) lie on the Cytoplasmic side of the membrane. A helical membrane pass occupies residues 240 to 260 (CSSHLCVVGLFYGTAIVMYVG). Over 261–273 (PRHGSPKEQKKYL) the chain is Extracellular. A helical membrane pass occupies residues 274-291 (LLFHSLFNPMLNPLIYSL). The Cytoplasmic portion of the chain corresponds to 292 to 310 (RNSDVKNTLKRVLRTQRAL).

It belongs to the G-protein coupled receptor 1 family. As to expression, olfactory epithelium.

Its subcellular location is the cell membrane. Odorant receptor. The protein is Olfactory receptor 2A7 of Mus musculus (Mouse).